We begin with the raw amino-acid sequence, 101 residues long: NAD(P)H-quinone oxidoreductase subunit 4L, chloroplastic (101 aa).

Helical transmembrane passes span 2-22, 32-52, and 64-84; these read ILDS…YGLI, MSLE…SNFI, and IFIM…ILAI.

The protein belongs to the complex I subunit 4L family. As to quaternary structure, NDH is composed of at least 16 different subunits, 5 of which are encoded in the nucleus.

It localises to the plastid. Its subcellular location is the chloroplast thylakoid membrane. It catalyses the reaction a plastoquinone + NADH + (n+1) H(+)(in) = a plastoquinol + NAD(+) + n H(+)(out). It carries out the reaction a plastoquinone + NADPH + (n+1) H(+)(in) = a plastoquinol + NADP(+) + n H(+)(out). Its function is as follows. NDH shuttles electrons from NAD(P)H:plastoquinone, via FMN and iron-sulfur (Fe-S) centers, to quinones in the photosynthetic chain and possibly in a chloroplast respiratory chain. The immediate electron acceptor for the enzyme in this species is believed to be plastoquinone. Couples the redox reaction to proton translocation, and thus conserves the redox energy in a proton gradient. The chain is NAD(P)H-quinone oxidoreductase subunit 4L, chloroplastic from Chlorokybus atmophyticus (Soil alga).